The chain runs to 441 residues: Neuraminidase (441 aa).

At 1–4 the chain is on the intravirion side; it reads TIGS. The tract at residues 3-25 is involved in apical transport and lipid raft association; sequence GSICMVIGIVSLMLQIGNMISIW. Residues 5 to 25 traverse the membrane as a helical segment; it reads ICMVIGIVSLMLQIGNMISIW. Over 26–441 the chain is Virion surface; sequence VSHSIQTGNQ…GAELPFTIDK (416 aa). Residues 28-62 form a hypervariable stalk region region; the sequence is HSIQTGNQNQVEPISNTNFLTEKAVASVTLAGNSS. N-linked (GlcNAc...) asparagine; by host glycosylation is present at Asn-60. The segment at 63–441 is head of neuraminidase; it reads LCPIRGWAVH…GAELPFTIDK (379 aa). 8 cysteine pairs are disulfide-bonded: Cys-64–Cys-389, Cys-96–Cys-101, Cys-156–Cys-203, Cys-205–Cys-210, Cys-251–Cys-264, Cys-253–Cys-262, Cys-290–Cys-307, and Cys-393–Cys-418. Arg-90 contacts substrate. Residue Asn-118 is glycosylated (N-linked (GlcNAc...) asparagine; by host). Catalysis depends on Asp-123, which acts as the Proton donor/acceptor. Position 124 (Arg-124) interacts with substrate. N-linked (GlcNAc...) asparagine; by host glycosylation is present at Asn-207. 249-250 is a binding site for substrate; it reads EE. Arg-265 provides a ligand contact to substrate. Residues Asp-266, Gly-270, and Asp-296 each contribute to the Ca(2+) site. Residue Arg-340 coordinates substrate. Catalysis depends on Tyr-374, which acts as the Nucleophile.

The protein belongs to the glycosyl hydrolase 34 family. Homotetramer. Ca(2+) is required as a cofactor. Post-translationally, N-glycosylated.

The protein resides in the virion membrane. It localises to the host apical cell membrane. It carries out the reaction Hydrolysis of alpha-(2-&gt;3)-, alpha-(2-&gt;6)-, alpha-(2-&gt;8)- glycosidic linkages of terminal sialic acid residues in oligosaccharides, glycoproteins, glycolipids, colominic acid and synthetic substrates.. With respect to regulation, inhibited by the neuraminidase inhibitors zanamivir (Relenza) and oseltamivir (Tamiflu). These drugs interfere with the release of progeny virus from infected cells and are effective against all influenza strains. Resistance to neuraminidase inhibitors is quite rare. Catalyzes the removal of terminal sialic acid residues from viral and cellular glycoconjugates. Cleaves off the terminal sialic acids on the glycosylated HA during virus budding to facilitate virus release. Additionally helps virus spread through the circulation by further removing sialic acids from the cell surface. These cleavages prevent self-aggregation and ensure the efficient spread of the progeny virus from cell to cell. Otherwise, infection would be limited to one round of replication. Described as a receptor-destroying enzyme because it cleaves a terminal sialic acid from the cellular receptors. May facilitate viral invasion of the upper airways by cleaving the sialic acid moieties on the mucin of the airway epithelial cells. Likely to plays a role in the budding process through its association with lipid rafts during intracellular transport. May additionally display a raft-association independent effect on budding. Plays a role in the determination of host range restriction on replication and virulence. Sialidase activity in late endosome/lysosome traffic seems to enhance virus replication. The protein is Neuraminidase of Aves (Cat).